The sequence spans 456 residues: Bifunctional protein GlmU (456 aa).

Positions 1-231 (MERTCLAIIL…EEELTGCNTR (231 aa)) are pyrophosphorylase. Residues 10-13 (LAAG), lysine 24, glutamine 77, and 82-83 (GT) contribute to the UDP-N-acetyl-alpha-D-glucosamine site. Aspartate 107 provides a ligand contact to Mg(2+). Residues glycine 143, glutamate 157, asparagine 172, and asparagine 229 each coordinate UDP-N-acetyl-alpha-D-glucosamine. Asparagine 229 contributes to the Mg(2+) binding site. Residues 232–252 (AELAYIERLWQQRRRHELMLA) are linker. The segment at 253–456 (GVSMVAPETV…LARKIAKAAE (204 aa)) is N-acetyltransferase. Positions 318 and 336 each coordinate UDP-N-acetyl-alpha-D-glucosamine. The active-site Proton acceptor is the histidine 348. Residues tyrosine 351 and asparagine 362 each coordinate UDP-N-acetyl-alpha-D-glucosamine. Acetyl-CoA is bound by residues alanine 365, 371-372 (NY), serine 390, serine 408, and arginine 425.

It in the N-terminal section; belongs to the N-acetylglucosamine-1-phosphate uridyltransferase family. This sequence in the C-terminal section; belongs to the transferase hexapeptide repeat family. In terms of assembly, homotrimer. It depends on Mg(2+) as a cofactor.

The protein localises to the cytoplasm. It catalyses the reaction alpha-D-glucosamine 1-phosphate + acetyl-CoA = N-acetyl-alpha-D-glucosamine 1-phosphate + CoA + H(+). It carries out the reaction N-acetyl-alpha-D-glucosamine 1-phosphate + UTP + H(+) = UDP-N-acetyl-alpha-D-glucosamine + diphosphate. Its pathway is nucleotide-sugar biosynthesis; UDP-N-acetyl-alpha-D-glucosamine biosynthesis; N-acetyl-alpha-D-glucosamine 1-phosphate from alpha-D-glucosamine 6-phosphate (route II): step 2/2. It functions in the pathway nucleotide-sugar biosynthesis; UDP-N-acetyl-alpha-D-glucosamine biosynthesis; UDP-N-acetyl-alpha-D-glucosamine from N-acetyl-alpha-D-glucosamine 1-phosphate: step 1/1. The protein operates within bacterial outer membrane biogenesis; LPS lipid A biosynthesis. In terms of biological role, catalyzes the last two sequential reactions in the de novo biosynthetic pathway for UDP-N-acetylglucosamine (UDP-GlcNAc). The C-terminal domain catalyzes the transfer of acetyl group from acetyl coenzyme A to glucosamine-1-phosphate (GlcN-1-P) to produce N-acetylglucosamine-1-phosphate (GlcNAc-1-P), which is converted into UDP-GlcNAc by the transfer of uridine 5-monophosphate (from uridine 5-triphosphate), a reaction catalyzed by the N-terminal domain. In Sinorhizobium medicae (strain WSM419) (Ensifer medicae), this protein is Bifunctional protein GlmU.